The following is a 116-amino-acid chain: NADH-ubiquinone oxidoreductase chain 3 (116 aa).

The next 3 helical transmembrane spans lie at 3 to 23 (LVIS…VVSF), 56 to 76 (FFLV…LLAL), and 85 to 105 (ATGT…GLIY).

The protein belongs to the complex I subunit 3 family.

It localises to the mitochondrion membrane. The enzyme catalyses a ubiquinone + NADH + 5 H(+)(in) = a ubiquinol + NAD(+) + 4 H(+)(out). Functionally, core subunit of the mitochondrial membrane respiratory chain NADH dehydrogenase (Complex I) that is believed to belong to the minimal assembly required for catalysis. Complex I functions in the transfer of electrons from NADH to the respiratory chain. The immediate electron acceptor for the enzyme is believed to be ubiquinone. This is NADH-ubiquinone oxidoreductase chain 3 (MT-ND3) from Formosania lacustris (Oriental stream loach).